A 358-amino-acid chain; its full sequence is Probable cinnamyl alcohol dehydrogenase (358 aa).

Position 48 (Cys48) interacts with Zn(2+). Ser50 serves as a coordination point for NADP(+). Zn(2+) is bound by residues His70, Glu71, Cys101, Cys104, Cys107, Cys115, and Cys164. Residues Thr168, 189 to 194, 212 to 217, Thr252, Gly276, and 299 to 301 contribute to the NADP(+) site; these read GLGGVG, SSSDKK, and SFV.

The protein belongs to the zinc-containing alcohol dehydrogenase family. Homodimer. The cofactor is Zn(2+). Most actively expressed in stem, hypocotyl and root tissue.

It catalyses the reaction (E)-cinnamyl alcohol + NADP(+) = (E)-cinnamaldehyde + NADPH + H(+). The enzyme catalyses (E)-coniferol + NADP(+) = (E)-coniferaldehyde + NADPH + H(+). The catalysed reaction is (E)-sinapyl alcohol + NADP(+) = (E)-sinapaldehyde + NADPH + H(+). It carries out the reaction (E)-4-coumaroyl alcohol + NADP(+) = (E)-4-coumaraldehyde + NADPH + H(+). It catalyses the reaction (E)-caffeyl alcohol + NADP(+) = (E)-caffeyl aldehyde + NADPH + H(+). Its pathway is aromatic compound metabolism; phenylpropanoid biosynthesis. This protein catalyzes the final step in a branch of phenylpropanoid synthesis specific for production of lignin monomers. It acts on coniferyl-, sinapyl-, 4-coumaryl- and cinnamyl-alcohol. The protein is Probable cinnamyl alcohol dehydrogenase (CAD2) of Medicago sativa (Alfalfa).